The primary structure comprises 322 residues: Protein lin-56 (322 aa).

Residues 264–322 are disordered; it reads SSQKLQQNGFPEKVEQMDKYSNKLKDEASDKKYEKPGKKDYVEEEGYWAPITDSEDDEA. Positions 275–304 are enriched in basic and acidic residues; the sequence is EKVEQMDKYSNKLKDEASDKKYEKPGKKDY.

Widely expressed throughout embryonic development. Expressed in the six multipotent ventral ectodermal blast cells, P3.p-P8.p, which generate the vulva and in their descendants throughout vulval development.

It localises to the nucleus. Its function is as follows. Required for translation, stability and/or localization of lin-15a. The chain is Protein lin-56 (lin-56) from Caenorhabditis elegans.